The sequence spans 489 residues: Zinc finger protein 58 (489 aa).

Positions 2 to 73 (LSFWDVAIDF…KRQAAAAVHP (72 aa)) constitute a KRAB domain. Residues 78-100 (NKCKDFSKAFFCKSLLTQHQRIR) form a C2H2-type 1; degenerate zinc finger. 14 C2H2-type zinc fingers span residues 106-128 (FKCE…KRIH), 134-156 (YKCE…QRVH), 162-184 (YKCE…KRIH), 190-212 (YKCE…QKNH), 218-240 (YKCE…QRIH), 246-268 (YKCE…QIIH), 274-296 (YKCA…QRIH), 302-324 (CKCK…QRIH), 330-352 (YKCG…QRFH), 358-380 (YKCE…KLRH), 386-408 (YKCE…QKIH), 410-432 (YKCG…QRVH), 438-460 (HVCE…QLVH), and 466-488 (YKCE…QGIH).

It belongs to the krueppel C2H2-type zinc-finger protein family. Expressed in liver, testis and, at considerably lower levels, in brain, spleen and heart.

Its subcellular location is the nucleus. In terms of biological role, may have a role during differentiation processes. The protein is Zinc finger protein 58 (Zfp58) of Mus musculus (Mouse).